The primary structure comprises 278 residues: HCLS1-associated protein X-1 (278 aa).

At Ser-2 the chain carries N-acetylserine. The required for localization in mitochondria stretch occupies residues 2 to 43; it reads SVFDLFRGFFGFPGPRSHRDPFFGGMTRDDDDDEDDEEEEDS. Disordered regions lie at residues 15 to 50 and 99 to 262; these read GPRSHRDPFFGGMTRDDDDDEDDEEEEDSGAWGRES and LPSH…ALDD. Over residues 30–43 the composition is skewed to acidic residues; sequence DDDDDEDDEEEEDS. The interval 113 to 278 is involved in HCLS1 binding; sequence TPGVRLREGQ…LLLGRWFRSR (166 aa). Basic and acidic residues predominate over residues 132–152; sequence PDSHQPRIFEGVLESHAKPES. The segment at 174–205 is involved in CASP9 binding; the sequence is VSPHSRAREDKDLDSQVSQEGLGPLLQPQPKS. The tract at residues 175 to 246 is involved in GNA13 binding; it reads SPHSRAREDK…TTVTHQEAHD (72 aa). The interval 182–278 is required for localization in sarcoplasmic reticulum; the sequence is EDKDLDSQVS…LLLGRWFRSR (97 aa). The involved in PKD2 binding stretch occupies residues 183–278; sequence DKDLDSQVSQ…LLLGRWFRSR (96 aa). Phosphoserine occurs at positions 188 and 191. The interval 202-224 is involved in PLN binding; the sequence is QPKSYFKSISVTKITKPDGTVEE. The interval 202-244 is involved in ATP2A2 binding; it reads QPKSYFKSISVTKITKPDGTVEEHRTVVDSEGRRETTVTHQEA. The mediates interaction with UCP3 stretch occupies residues 209 to 278; it reads SISVTKITKP…LLLGRWFRSR (70 aa). The span at 216-254 shows a compositional bias: basic and acidic residues; the sequence is TKPDGTVEEHRTVVDSEGRRETTVTHQEAHDSSRSDPDP. Positions 269 to 278 are required for ITGB6 binding; it reads LLLGRWFRSR.

Belongs to the HAX1 family. Interacts with ABCB1, ABCB4 and ABCB11. Directly associates with HCLS1/HS1, through binding to its N-terminal region. Interacts with CTTN. Interacts with PKD2. Interacts with GNA13. Interacts with CASP9. Interacts with ITGB6. Interacts with PLN and ATP2A2; these interactions are inhibited by calcium. Interacts with GRB7. Interacts (via C-terminus) with XIAP/BIRC4 (via BIR 2 domain and BIR 3 domain) and this interaction blocks ubiquitination of XIAP/BIRC4. Interacts with TPC2. Interacts with KCNC3. Interacts with XPO1. Interacts with RNF217. Interacts with UCP3; the interaction is direct and calcium-dependent. Interacts with MAPRE2; this interaction regulates cell migration in keratinocytes. As to expression, present in striated muscles (at protein level).

It localises to the mitochondrion matrix. The protein resides in the endoplasmic reticulum. The protein localises to the nucleus membrane. It is found in the cytoplasmic vesicle. Its subcellular location is the cytoplasm. It localises to the cell cortex. The protein resides in the cell membrane. The protein localises to the sarcoplasmic reticulum. It is found in the P-body. Its subcellular location is the nucleus. In terms of biological role, recruits the Arp2/3 complex to the cell cortex and regulates reorganization of the cortical actin cytoskeleton via its interaction with KCNC3 and the Arp2/3 complex. Slows down the rate of inactivation of KCNC3 channels. Promotes GNA13-mediated cell migration. Involved in the clathrin-mediated endocytosis pathway. May be involved in internalization of ABC transporters such as ABCB11. May inhibit CASP9 and CASP3. Promotes cell survival. May regulate intracellular calcium pools. This is HCLS1-associated protein X-1 (Hax1) from Rattus norvegicus (Rat).